A 2179-amino-acid polypeptide reads, in one-letter code: Voltage-dependent L-type calcium channel subunit alpha-1D (2179 aa).

3 disordered regions span residues 1–21 (MMMMMMMKKMQHQRQHQEDHA), 30–49 (TRLPISGEGPTSQPNSSKQT), and 64–100 (KAAQTMSTSAPPPVGSLSQRKRQQYAKSKKQGNSSNS). Over 1–126 (MMMMMMMKKM…RACISIVEWK (126 aa)) the chain is Cytoplasmic. Positions 38 to 49 (GPTSQPNSSKQT) are enriched in polar residues. Basic residues predominate over residues 82 to 93 (QRKRQQYAKSKK). The stretch at 113 to 409 (NPIRRACISI…LVLGVLSGEF (297 aa)) is one I repeat. Residues 127-145 (PFDIFILLAIFANCVALAI) traverse the membrane as a helical segment. Residues 146-163 (YIPFPEDDSNSTNHNLEK) are Extracellular-facing. Residues 164–183 (VEYAFLIIFTVETFLKIIAY) form a helical membrane-spanning segment. Residues 184–195 (GLLLHPNAYVRN) lie on the Cytoplasmic side of the membrane. The helical transmembrane segment at 196-214 (GWNLLDFVIVIVGLFSVIL) threads the bilayer. The Extracellular portion of the chain corresponds to 215 to 235 (EQLTKETEGGNHSSGKSGGFD). A helical membrane pass occupies residues 236–254 (VKALRAFRVLRPLRLVSGV). Topologically, residues 255–273 (PSLQVVLNSIIKAMVPLLH) are cytoplasmic. Residues 274 to 293 (IALLVLFVIIIYAIIGLELF) traverse the membrane as a helical segment. The Extracellular portion of the chain corresponds to 294–381 (IGKMHKTCFF…WVNDAIGWEW (88 aa)). A Ca(2+)-binding site is contributed by Glu-364. Residues 382 to 406 (PWVYFVSLIILGSFFVLNLVLGVLS) form a helical membrane-spanning segment. The Cytoplasmic portion of the chain corresponds to 407–543 (GEFSKEREKA…RRCRAAVKSV (137 aa)). Positions 429 to 446 (QQLEEDLKGYLDWITQAE) are binding to the beta subunit. The disordered stretch occupies residues 449–480 (DPENEEEGGEEGKRNTSMPTSETESVNTENVS). Residues 463-479 (NTSMPTSETESVNTENV) show a composition bias toward polar residues. The II repeat unit spans residues 529–775 (NRFNRRRCRA…VFLAIAVDNL (247 aa)). Residues 544–563 (TFYWLVIVLVFLNTLTISSE) form a helical membrane-spanning segment. The Extracellular portion of the chain corresponds to 564-578 (HYNQPDWLTQIQDIA). A helical transmembrane segment spans residues 579-597 (NKVLLALFTCEMLVKMYSL). Topologically, residues 598–605 (GLQAYFVS) are cytoplasmic. The chain crosses the membrane as a helical span at residues 606–624 (LFNRFDCFVVCGGITETIL). At 625 to 634 (VELELMSPLG) the chain is on the extracellular side. The chain crosses the membrane as a helical span at residues 635–653 (VSVFRCVRLLRIFKVTRHW). The Cytoplasmic portion of the chain corresponds to 654-672 (TSLSNLVASLLNSMKSIAS). The chain crosses the membrane as a helical span at residues 673–693 (LLLLLFLFIIIFSLLGMQLFG). The Extracellular portion of the chain corresponds to 694-747 (GKFNFDETQTKRSTFDNFPQALLTVFQILTGEDWNAVMYDGIMAYGGPSSSGMI). Ca(2+) is bound at residue Glu-725. A helical transmembrane segment spans residues 748 to 772 (VCIYFIILFICGNYILLNVFLAIAV). Residues 771–810 (AVDNLADAESLNTAQKEEAEEKERKKIARKESLENKKNNK) are a coiled coil. Over 773 to 906 (DNLADAESLN…VGCHKLINHH (134 aa)) the chain is Cytoplasmic. The span at 786-810 (KEEAEEKERKKIARKESLENKKNNK) shows a compositional bias: basic and acidic residues. Positions 786–870 (KEEAEEKERK…AGPRPRRISE (85 aa)) are disordered. The span at 811–822 (PEVNQIANSDNK) shows a compositional bias: polar residues. The segment covering 845–858 (VGEEEEEEEEDEPE) has biased composition (acidic residues). The stretch at 893–1175 (NPIRVGCHKL…IFVGFVIVTF (283 aa)) is one III repeat. A helical membrane pass occupies residues 907–925 (IFTNLILVFIMLSSAALAA). Residues 926–941 (EDPIRSHSFRNTILGY) lie on the Extracellular side of the membrane. Residues 942 to 961 (FDYAFTAIFTVEILLKMTTF) form a helical membrane-spanning segment. The Cytoplasmic portion of the chain corresponds to 962–973 (GAFLHKGAFCRN). A helical membrane pass occupies residues 974–992 (YFNLLDMLVVGVSLVSFGI). Over 993-998 (QSSAIS) the chain is Extracellular. Residues 999–1018 (VVKILRVLRVLRPLRAINRA) form a helical membrane-spanning segment. The Cytoplasmic segment spans residues 1019 to 1037 (KGLKHVVQCVFVAIRTIGN). Residues 1038–1057 (IMIVTTLLQFMFACIGVQLF) traverse the membrane as a helical segment. Over 1058 to 1147 (KGKFYRCTDE…VGPVYNYRVE (90 aa)) the chain is Extracellular. The tract at residues 1095-1185 (RIWQNSDFNF…QEQGEKEYKN (91 aa)) is dihydropyridine binding. Glu-1121 serves as a coordination point for Ca(2+). The helical transmembrane segment at 1148 to 1168 (ISIFFIIYIIIVAFFMMNIFV) threads the bilayer. The Cytoplasmic segment spans residues 1169-1225 (GFVIVTFQEQGEKEYKNCELDKNQRQCVEYALKARPLRRYIPKNPYQYKFWYVVNSS). The stretch at 1212 to 1487 (NPYQYKFWYV…LFVAVIMDNF (276 aa)) is one IV repeat. A helical transmembrane segment spans residues 1226 to 1244 (PFEYMMFVLIMLNTLCLAM). Residues 1245–1259 (QHYEQSKMFNDAMDI) are Extracellular-facing. A helical membrane pass occupies residues 1260–1279 (LNMVFTGVFTVEMVLKVIAF). The Cytoplasmic segment spans residues 1280–1286 (KPKGYFS). Residues 1287–1308 (DAWNTFDSLIVIGSIIDVALSE) traverse the membrane as a helical segment. Residues 1309-1333 (ADPSESETIPLPTATPGNSEESNRI) lie on the Extracellular side of the membrane. The helical transmembrane segment at 1334 to 1353 (SITFFRLFRVMRLVKLLSRG) threads the bilayer. The Cytoplasmic segment spans residues 1354–1372 (EGIRTLLWTFIKSFQALPY). A helical transmembrane segment spans residues 1373-1392 (VALLIAMLFFIYAVIGMQMF). The Extracellular segment spans residues 1393 to 1459 (GKVAMRDNNQ…GEEYTCGSNF (67 aa)). The interval 1440 to 1506 (LCDPDSDYNP…LGPHHLDEFK (67 aa)) is dihydropyridine binding. The tract at residues 1452-1495 (EYTCGSNFAIVYFISFYMLCAFLIINLFVAVIMDNFDYLTRDWS) is phenylalkylamine binding. Residues 1460 to 1484 (AIVYFISFYMLCAFLIINLFVAVIM) form a helical membrane-spanning segment. Topologically, residues 1485 to 2179 (DNFDYLTRDW…ADEMICITTL (695 aa)) are cytoplasmic. 3 disordered regions span residues 1704-1789 (LLGN…AHGK), 1896-1941 (FERP…RSSF), and 2135-2171 (GDMGPISHRQDYELQDFGPGYSDEEPDPGREEEDLAD). Polar residues predominate over residues 1764-1782 (SIGKQAPTSTNANLNNANM). The span at 2156-2171 (SDEEPDPGREEEDLAD) shows a compositional bias: acidic residues.

It belongs to the calcium channel alpha-1 subunit (TC 1.A.1.11) family. CACNA1D subfamily. Voltage-dependent calcium channels are multisubunit complexes, consisting of alpha-1, alpha-2, beta and delta subunits in a 1:1:1:1 ratio. The channel activity is directed by the pore-forming and voltage-sensitive alpha-1 subunit. In many cases, this subunit is sufficient to generate voltage-sensitive calcium channel activity. The auxiliary subunits beta and alpha-2/delta linked by a disulfide bridge regulate the channel activity. Interacts (via IQ domain) with CABP1 and CABP4 in a calcium independent manner. Interacts with RIMBP2. As to expression, expressed in the inner hair cells (IHC) of the cochlea.

The protein resides in the membrane. It catalyses the reaction Ca(2+)(in) = Ca(2+)(out). Its function is as follows. Voltage-sensitive calcium channels (VSCC) mediate the entry of calcium ions into excitable cells and are also involved in a variety of calcium-dependent processes, including muscle contraction, hormone or neurotransmitter release, gene expression, cell motility, cell division and cell death. The isoform alpha-1D gives rise to L-type calcium currents. Long-lasting (L-type) calcium channels belong to the 'high-voltage activated' (HVA) group. They are blocked by dihydropyridines (DHP), phenylalkylamines, and by benzothiazepines. This Mus musculus (Mouse) protein is Voltage-dependent L-type calcium channel subunit alpha-1D (Cacna1d).